Consider the following 213-residue polypeptide: Pyridoxine/pyridoxamine 5'-phosphate oxidase 2 (213 aa).

Substrate is bound by residues 9-12 and Lys-67; that span reads RQRY. FMN is bound by residues 62 to 67, 77 to 78, Lys-84, and Gln-106; these read RTVLLK and FT. Substrate-binding residues include Tyr-124, Arg-128, and Ser-132. FMN-binding positions include 141–142 and Trp-186; that span reads QS. Residue 192–194 coordinates substrate; it reads RLH. An FMN-binding site is contributed by Arg-196.

This sequence belongs to the pyridoxamine 5'-phosphate oxidase family. In terms of assembly, homodimer. Requires FMN as cofactor.

The enzyme catalyses pyridoxamine 5'-phosphate + O2 + H2O = pyridoxal 5'-phosphate + H2O2 + NH4(+). It catalyses the reaction pyridoxine 5'-phosphate + O2 = pyridoxal 5'-phosphate + H2O2. Its pathway is cofactor metabolism; pyridoxal 5'-phosphate salvage; pyridoxal 5'-phosphate from pyridoxamine 5'-phosphate: step 1/1. It participates in cofactor metabolism; pyridoxal 5'-phosphate salvage; pyridoxal 5'-phosphate from pyridoxine 5'-phosphate: step 1/1. Functionally, catalyzes the oxidation of either pyridoxine 5'-phosphate (PNP) or pyridoxamine 5'-phosphate (PMP) into pyridoxal 5'-phosphate (PLP). This chain is Pyridoxine/pyridoxamine 5'-phosphate oxidase 2, found in Hydrogenovibrio crunogenus (strain DSM 25203 / XCL-2) (Thiomicrospira crunogena).